The primary structure comprises 117 residues: Fluoride-specific ion channel FluC 2 (117 aa).

A run of 2 helical transmembrane segments spans residues 1-21 and 46-66; these read MISIILVMIGGGLGAIARSAI and FLIGLTIGLSISISWFPAFFV. Na(+) is bound by residues glycine 71 and threonine 74. The helical transmembrane segment at 95–115 threads the bilayer; sequence LFLNYSLLQFIIGFIACYIGY.

The protein belongs to the fluoride channel Fluc/FEX (TC 1.A.43) family.

Its subcellular location is the cell membrane. It catalyses the reaction fluoride(in) = fluoride(out). Its activity is regulated as follows. Na(+) is not transported, but it plays an essential structural role and its presence is essential for fluoride channel function. Functionally, fluoride-specific ion channel. Important for reducing fluoride concentration in the cell, thus reducing its toxicity. This is Fluoride-specific ion channel FluC 2 from Staphylococcus aureus (strain MRSA252).